The following is a 2073-amino-acid chain: Dedicator of cytokinesis protein 11 (2073 aa).

Ser-12 carries the phosphoserine modification. At Thr-16 the chain carries Phosphothreonine. Residues Ser-23 and Ser-161 each carry the phosphoserine modification. The PH domain occupies 165–272 (GVIKQGWLHK…WLITLKKIIQ (108 aa)). Tyr-248 is modified (phosphotyrosine). Phosphoserine is present on residues Ser-306, Ser-440, and Ser-445. The C2 DOCK-type domain occupies 640 to 818 (KNHLYVYPLQ…PLLKIKSHLE (179 aa)). Positions 1226-1267 (FQNGHGIKREDSRGSLIPEGATGFPDQGNTGENTRQSSTRSS) are disordered. Ser-1237 and Ser-1240 each carry phosphoserine. A DOCKER domain is found at 1609-2036 (KSYASTPELR…LSDIIHEQIL (428 aa)).

It belongs to the DOCK family. Interacts with CDC42.

Guanine nucleotide-exchange factor (GEF) that activates CDC42 by exchanging bound GDP for free GTP. Required for marginal zone (MZ) B-cell development, is associated with early bone marrow B-cell development, MZ B-cell formation, MZ B-cell number and marginal metallophilic macrophages morphology. Facilitates filopodia formation through the activation of CDC42. This Homo sapiens (Human) protein is Dedicator of cytokinesis protein 11.